Here is a 176-residue protein sequence, read N- to C-terminus: ATP-dependent protease subunit HslV (176 aa).

T5 is an active-site residue. Na(+)-binding residues include S161, C164, and T167.

This sequence belongs to the peptidase T1B family. HslV subfamily. A double ring-shaped homohexamer of HslV is capped on each side by a ring-shaped HslU homohexamer. The assembly of the HslU/HslV complex is dependent on binding of ATP.

It is found in the cytoplasm. The enzyme catalyses ATP-dependent cleavage of peptide bonds with broad specificity.. With respect to regulation, allosterically activated by HslU binding. Functionally, protease subunit of a proteasome-like degradation complex believed to be a general protein degrading machinery. The protein is ATP-dependent protease subunit HslV of Caldanaerobacter subterraneus subsp. tengcongensis (strain DSM 15242 / JCM 11007 / NBRC 100824 / MB4) (Thermoanaerobacter tengcongensis).